We begin with the raw amino-acid sequence, 204 residues long: Recombination protein RecR (204 aa).

A C4-type zinc finger spans residues 58-75 (CSVCQNVTDREEDPCSIC). The 99-residue stretch at 83-181 (TVICVVESPV…EVTKIARGIP (99 aa)) folds into the Toprim domain.

It belongs to the RecR family.

May play a role in DNA repair. It seems to be involved in an RecBC-independent recombinational process of DNA repair. It may act with RecF and RecO. The protein is Recombination protein RecR of Chlorobium luteolum (strain DSM 273 / BCRC 81028 / 2530) (Pelodictyon luteolum).